The primary structure comprises 456 residues: Bifunctional protein GlmU (456 aa).

The interval 1 to 229 is pyrophosphorylase; it reads MLNNAMSVVI…LSEVEGVNNR (229 aa). Residues 11–14, lysine 25, glutamine 76, 81–82, 103–105, glycine 140, glutamate 154, asparagine 169, and asparagine 227 each bind UDP-N-acetyl-alpha-D-glucosamine; these read LAAG, GT, and YGD. Aspartate 105 provides a ligand contact to Mg(2+). Asparagine 227 provides a ligand contact to Mg(2+). Positions 230–250 are linker; it reads LQLSRLERVYQSEQAEKLLLA. Residues 251-456 form an N-acetyltransferase region; the sequence is GVMLRDPARF…EGWRRPVKKK (206 aa). Residues arginine 333 and lysine 351 each contribute to the UDP-N-acetyl-alpha-D-glucosamine site. The active-site Proton acceptor is histidine 363. UDP-N-acetyl-alpha-D-glucosamine contacts are provided by tyrosine 366 and asparagine 377. Residues alanine 380, 386–387, serine 405, alanine 423, and arginine 440 contribute to the acetyl-CoA site; that span reads NY.

This sequence in the N-terminal section; belongs to the N-acetylglucosamine-1-phosphate uridyltransferase family. The protein in the C-terminal section; belongs to the transferase hexapeptide repeat family. Homotrimer. The cofactor is Mg(2+).

It localises to the cytoplasm. It catalyses the reaction alpha-D-glucosamine 1-phosphate + acetyl-CoA = N-acetyl-alpha-D-glucosamine 1-phosphate + CoA + H(+). The enzyme catalyses N-acetyl-alpha-D-glucosamine 1-phosphate + UTP + H(+) = UDP-N-acetyl-alpha-D-glucosamine + diphosphate. Its pathway is nucleotide-sugar biosynthesis; UDP-N-acetyl-alpha-D-glucosamine biosynthesis; N-acetyl-alpha-D-glucosamine 1-phosphate from alpha-D-glucosamine 6-phosphate (route II): step 2/2. It participates in nucleotide-sugar biosynthesis; UDP-N-acetyl-alpha-D-glucosamine biosynthesis; UDP-N-acetyl-alpha-D-glucosamine from N-acetyl-alpha-D-glucosamine 1-phosphate: step 1/1. It functions in the pathway bacterial outer membrane biogenesis; LPS lipid A biosynthesis. Catalyzes the last two sequential reactions in the de novo biosynthetic pathway for UDP-N-acetylglucosamine (UDP-GlcNAc). The C-terminal domain catalyzes the transfer of acetyl group from acetyl coenzyme A to glucosamine-1-phosphate (GlcN-1-P) to produce N-acetylglucosamine-1-phosphate (GlcNAc-1-P), which is converted into UDP-GlcNAc by the transfer of uridine 5-monophosphate (from uridine 5-triphosphate), a reaction catalyzed by the N-terminal domain. The sequence is that of Bifunctional protein GlmU from Escherichia coli O8 (strain IAI1).